We begin with the raw amino-acid sequence, 89 residues long: Small ribosomal subunit protein uS15 (89 aa).

Belongs to the universal ribosomal protein uS15 family. Part of the 30S ribosomal subunit. Forms a bridge to the 50S subunit in the 70S ribosome, contacting the 23S rRNA.

Functionally, one of the primary rRNA binding proteins, it binds directly to 16S rRNA where it helps nucleate assembly of the platform of the 30S subunit by binding and bridging several RNA helices of the 16S rRNA. In terms of biological role, forms an intersubunit bridge (bridge B4) with the 23S rRNA of the 50S subunit in the ribosome. This Blochmanniella pennsylvanica (strain BPEN) protein is Small ribosomal subunit protein uS15.